A 262-amino-acid polypeptide reads, in one-letter code: tRNA pseudouridine synthase A (262 aa).

Catalysis depends on Asp-51, which acts as the Nucleophile. Tyr-109 is a binding site for substrate.

This sequence belongs to the tRNA pseudouridine synthase TruA family. In terms of assembly, homodimer.

It catalyses the reaction uridine(38/39/40) in tRNA = pseudouridine(38/39/40) in tRNA. Formation of pseudouridine at positions 38, 39 and 40 in the anticodon stem and loop of transfer RNAs. This chain is tRNA pseudouridine synthase A, found in Aliivibrio fischeri (strain ATCC 700601 / ES114) (Vibrio fischeri).